The sequence spans 166 residues: PTS system glucose-specific EIIA component (166 aa).

One can recognise a PTS EIIA type-1 domain in the interval 34-138 (DPVFAQKMMG…SVISPIIITN (105 aa)). Positions 71 and 86 each coordinate Zn(2+). The active-site Tele-phosphohistidine intermediate; for EIIA activity is the His-86. Phosphohistidine; by HPr is present on His-86.

In terms of assembly, heterodimer with glycerol kinase (glpk). The cofactor is Zn(2+).

The protein resides in the cytoplasm. The phosphoenolpyruvate-dependent sugar phosphotransferase system (sugar PTS), a major carbohydrate active transport system, catalyzes the phosphorylation of incoming sugar substrates concomitantly with their translocation across the cell membrane. The enzyme II complex composed of PtsG and Crr is involved in glucose transport. This is PTS system glucose-specific EIIA component (crr) from Staphylococcus aureus (strain MSSA476).